We begin with the raw amino-acid sequence, 446 residues long: Tubulin beta-1 chain (446 aa).

Residues 1 to 4 (MREI) carry the MREI motif motif. 8 residues coordinate GTP: Q11, E69, S138, G142, T143, G144, N204, and N226. E69 lines the Mg(2+) pocket. The tract at residues 426-446 (QDATAEEEGEFEEEGEYEDGA) is disordered. Acidic residues predominate over residues 429–446 (TAEEEGEFEEEGEYEDGA). E438 is subject to 5-glutamyl polyglutamate.

This sequence belongs to the tubulin family. As to quaternary structure, dimer of alpha and beta chains. A typical microtubule is a hollow water-filled tube with an outer diameter of 25 nm and an inner diameter of 15 nM. Alpha-beta heterodimers associate head-to-tail to form protofilaments running lengthwise along the microtubule wall with the beta-tubulin subunit facing the microtubule plus end conferring a structural polarity. Microtubules usually have 13 protofilaments but different protofilament numbers can be found in some organisms and specialized cells. Mg(2+) serves as cofactor. Some glutamate residues at the C-terminus are polyglycylated, resulting in polyglycine chains on the gamma-carboxyl group. Glycylation is mainly limited to tubulin incorporated into axonemes (cilia and flagella) whereas glutamylation is prevalent in neuronal cells, centrioles, axonemes, and the mitotic spindle. Both modifications can coexist on the same protein on adjacent residues, and lowering polyglycylation levels increases polyglutamylation, and reciprocally. The precise function of polyglycylation is still unclear. In terms of processing, some glutamate residues at the C-terminus are polyglutamylated, resulting in polyglutamate chains on the gamma-carboxyl group. Polyglutamylation plays a key role in microtubule severing by spastin (SPAST). SPAST preferentially recognizes and acts on microtubules decorated with short polyglutamate tails: severing activity by SPAST increases as the number of glutamates per tubulin rises from one to eight, but decreases beyond this glutamylation threshold. As to expression, brain.

The protein localises to the cytoplasm. It is found in the cytoskeleton. Functionally, tubulin is the major constituent of microtubules, a cylinder consisting of laterally associated linear protofilaments composed of alpha- and beta-tubulin heterodimers. Microtubules grow by the addition of GTP-tubulin dimers to the microtubule end, where a stabilizing cap forms. Below the cap, tubulin dimers are in GDP-bound state, owing to GTPase activity of alpha-tubulin. The sequence is that of Tubulin beta-1 chain (tubb1) from Notothenia neglecta (Yellowbelly rockcod).